We begin with the raw amino-acid sequence, 348 residues long: Sec-independent protein translocase protein TatC (348 aa).

Transmembrane regions (helical) follow at residues 7–27 (LCLTVSTILCAGFASNLMDIL), 162–182 (VVISFPLLLYFLLQFIIPGLL), 192–212 (CMAVGFGLFLAGTLFCYFIVL), 244–264 (MILMFGLAFELPVVVMPFVKL), 278–298 (YAIVAIAVLAAVITPTPDVAT), and 299–319 (MMLMAVPMYALYEICIILAWM).

This sequence belongs to the TatC family. As to quaternary structure, forms a complex with TatA.

It localises to the cell membrane. Functionally, part of the twin-arginine translocation (Tat) system that transports large folded proteins containing a characteristic twin-arginine motif in their signal peptide across membranes. The chain is Sec-independent protein translocase protein TatC from Akkermansia muciniphila (strain ATCC BAA-835 / DSM 22959 / JCM 33894 / BCRC 81048 / CCUG 64013 / CIP 107961 / Muc).